Reading from the N-terminus, the 244-residue chain is tRNA pseudouridine synthase A (244 aa).

Catalysis depends on Asp52, which acts as the Nucleophile. Residue Tyr110 coordinates substrate.

The protein belongs to the tRNA pseudouridine synthase TruA family. As to quaternary structure, homodimer.

The catalysed reaction is uridine(38/39/40) in tRNA = pseudouridine(38/39/40) in tRNA. Its function is as follows. Formation of pseudouridine at positions 38, 39 and 40 in the anticodon stem and loop of transfer RNAs. The chain is tRNA pseudouridine synthase A from Finegoldia magna (strain ATCC 29328 / DSM 20472 / WAL 2508) (Peptostreptococcus magnus).